We begin with the raw amino-acid sequence, 311 residues long: Olfactory receptor 8B8 (311 aa).

Topologically, residues 1–25 are extracellular; the sequence is MAAENSSFVTQFILAGLTDQPGVQI. An N-linked (GlcNAc...) asparagine glycan is attached at asparagine 5. A helical membrane pass occupies residues 26–46; sequence PLFFLFLGFYVVTVVGNLGLI. Residues 47 to 54 are Cytoplasmic-facing; it reads TLIRLNSH. Residues 55–75 form a helical membrane-spanning segment; that stretch reads LHTPMYFFLYNLSFIDFCYSS. The Extracellular segment spans residues 76-99; it reads VITPKMLMSFVLKKNSISYAGCMT. Cysteine 97 and cysteine 189 form a disulfide bridge. A helical transmembrane segment spans residues 100-120; sequence QLFFFLFFVVSESFILSAMAY. Residues 121 to 139 lie on the Cytoplasmic side of the membrane; it reads DRYVAICNPLLYMVTMSPQ. Residues 140 to 160 form a helical membrane-spanning segment; the sequence is VCFLLLLGVYGMGFAGAMAHT. Residues 161 to 197 are Extracellular-facing; the sequence is ACMMGVTFCANNLVNHYMCDILPLLECACTSTYVNEL. A helical transmembrane segment spans residues 198–217; sequence VVFVVVGIDIGVPTVTIFIS. Residues 218–237 are Cytoplasmic-facing; that stretch reads YALILSSIFHIDSTEGRSKA. The chain crosses the membrane as a helical span at residues 238–258; the sequence is FSTCSSHIIAVSLFFGSGAFM. Residues 259-271 are Extracellular-facing; that stretch reads YLKPFSLLAMNQG. The helical transmembrane segment at 272–292 threads the bilayer; that stretch reads KVSSLFYTTVVPMLNPLIYSL. Residues 293–311 lie on the Cytoplasmic side of the membrane; the sequence is RNKDVKVALKKILNKNAFS.

It belongs to the G-protein coupled receptor 1 family. In terms of tissue distribution, expressed in the tongue and testis.

It localises to the cell membrane. In terms of biological role, odorant receptor (Potential). May be involved in taste perception. This Homo sapiens (Human) protein is Olfactory receptor 8B8.